A 1301-amino-acid chain; its full sequence is DNA-directed RNA polymerase subunit beta (1301 aa).

The protein belongs to the RNA polymerase beta chain family. In plastids the minimal PEP RNA polymerase catalytic core is composed of four subunits: alpha, beta, beta', and beta''. When a (nuclear-encoded) sigma factor is associated with the core the holoenzyme is formed, which can initiate transcription.

It localises to the plastid. The protein localises to the chloroplast. It carries out the reaction RNA(n) + a ribonucleoside 5'-triphosphate = RNA(n+1) + diphosphate. In terms of biological role, DNA-dependent RNA polymerase catalyzes the transcription of DNA into RNA using the four ribonucleoside triphosphates as substrates. The chain is DNA-directed RNA polymerase subunit beta from Chlorella vulgaris (Green alga).